A 242-amino-acid polypeptide reads, in one-letter code: AA9 family lytic polysaccharide monooxygenase F (242 aa).

The signal sequence occupies residues 1 to 20; that stretch reads MVQFKLSTASLLALASYAAA. A Cu(2+)-binding site is contributed by His21. Positions 31-53 are disordered; sequence GQTYPGADPHNPNPESPGWQAEN. Intrachain disulfides connect Cys71-Cys192 and Cys112-Cys116. Residue His101 coordinates Cu(2+). O2 contacts are provided by His178 and Gln187. Tyr189 provides a ligand contact to Cu(2+).

The protein belongs to the polysaccharide monooxygenase AA9 family. Cu(2+) is required as a cofactor.

It localises to the secreted. The catalysed reaction is [(1-&gt;4)-beta-D-glucosyl]n+m + reduced acceptor + O2 = 4-dehydro-beta-D-glucosyl-[(1-&gt;4)-beta-D-glucosyl]n-1 + [(1-&gt;4)-beta-D-glucosyl]m + acceptor + H2O.. In terms of biological role, lytic polysaccharide monooxygenase (LPMO) that depolymerizes crystalline and amorphous polysaccharides via the oxidation of scissile alpha- or beta-(1-4)-glycosidic bonds, yielding C1 or C4 oxidation products. Catalysis by LPMOs requires the reduction of the active-site copper from Cu(II) to Cu(I) by a reducing agent and H(2)O(2) or O(2) as a cosubstrate. Active on hemicelluloses, including xylan, glucomannan, and xyloglucan. Shows clear activity on cellooligosaccharides, generating C4 oxidation products. Has no activity on ivory nut mannan (INM), a linear beta-1,4-linked mannan without substitutions. This Malbranchea cinnamomea (Thermophilic fungus) protein is AA9 family lytic polysaccharide monooxygenase F.